Consider the following 141-residue polypeptide: Glutamyl-tRNA(Gln) amidotransferase subunit C, chloroplastic/mitochondrial (141 aa).

This sequence belongs to the GatC family. In terms of assembly, subunit of the heterotrimeric GatCAB amidotransferase (AdT) complex, composed of A, B and C subunits.

The protein resides in the mitochondrion. Its subcellular location is the plastid. It is found in the chloroplast. It carries out the reaction L-glutamyl-tRNA(Gln) + L-glutamine + ATP + H2O = L-glutaminyl-tRNA(Gln) + L-glutamate + ADP + phosphate + H(+). In terms of biological role, allows the formation of correctly charged Gln-tRNA(Gln) through the transamidation of misacylated Glu-tRNA(Gln) in chloroplasts and mitochondria. The reaction takes place in the presence of glutamine and ATP through an activated gamma-phospho-Glu-tRNA(Gln). In Populus trichocarpa (Western balsam poplar), this protein is Glutamyl-tRNA(Gln) amidotransferase subunit C, chloroplastic/mitochondrial.